The primary structure comprises 90 residues: UPF0237 protein MMP0657 (90 aa).

The region spanning 5 to 79 (VITVVGVDKP…SEIGVKINVQ (75 aa)) is the ACT domain.

It belongs to the UPF0237 family.

The protein is UPF0237 protein MMP0657 of Methanococcus maripaludis (strain DSM 14266 / JCM 13030 / NBRC 101832 / S2 / LL).